The chain runs to 291 residues: Insulin-like growth factor-binding protein 3 (291 aa).

Residues 1–27 (MLRARPALWAAALTALTLLRGPPAARA) form the signal peptide. Residues 28 to 134 (GAGTMGAGPV…LRPYLLPSAS (107 aa)) form an IGF-binding region. An IGFBP N-terminal domain is found at 36 to 119 (PVVRCEPCDA…LDGRGLCANA (84 aa)). 6 disulfides stabilise this stretch: Cys40/Cys69, Cys43/Cys71, Cys51/Cys72, Cys60/Cys75, Cys83/Cys96, and Cys90/Cys116. Residues Asn118 and Asn136 are each glycosylated (N-linked (GlcNAc...) asparagine). 2 disordered regions span residues 132 to 162 (SASGNGSESEEDHSMGSTENQAGPSTHRVPV) and 177 to 211 (KGHAKDSQRYKVDYESQSTDTQNFSSESKRETEYG). A compositionally biased stretch (polar residues) spans 146 to 155 (MGSTENQAGP). At Ser148 the chain carries Phosphoserine. Residues 177 to 190 (KGHAKDSQRYKVDY) are compositionally biased toward basic and acidic residues. Residues 191–202 (ESQSTDTQNFSS) show a composition bias toward polar residues. Asn199 carries an N-linked (GlcNAc...) asparagine glycan. Position 201 is a phosphoserine (Ser201). A Thyroglobulin type-1 domain is found at 210-285 (YGPCRREMED…DVKGKGDVHC (76 aa)). Disulfide bonds link Cys213/Cys240, Cys251/Cys262, and Cys264/Cys285.

Interacts with XLKD1. Binds IGF2 more than IGF1. Forms a ternary complex of about 140 to 150 kDa with IGF1 or IGF2 and a 85 kDa glycoprotein (ALS). Interacts with humanin; humanin competes with importin KPNB1 for binding to IGFBP3, blocking IGFBP3 nuclear import and IGFBP3-mediated apoptosis. Interacts with TMEM219. Interacts with RXRA; this interaction modulates the transcriptional activity of RXRA. Interacts with LRP1; this interaction mediates cell growth inhibition independent of IGF1. Post-translationally, phosphorylated by FAM20C in the extracellular medium. Phosphorylated by CK2; resulting in decreased nuclear localization. Plasma; expressed by most tissues.

The protein localises to the secreted. It localises to the nucleus. Its function is as follows. Multifunctional protein that plays a critical role in regulating the availability of IGFs such as IGF1 and IGF2 to their receptors and thereby regulates IGF-mediated cellular processes including proliferation, differentiation, and apoptosis in a cell-type specific manner. Also exhibits IGF-independent antiproliferative and apoptotic effects mediated by its receptor TMEM219/IGFBP-3R. Inhibits the positive effect of humanin on insulin sensitivity. Promotes testicular germ cell apoptosis. Acts via LRP-1/alpha2M receptor, also known as TGF-beta type V receptor, to mediate cell growth inhibition independent of IGF1. Mechanistically, induces serine-specific dephosphorylation of IRS1 or IRS2 upon ligation to its receptor, leading to the inhibitory cascade. In the nucleus, interacts with transcription factors such as retinoid X receptor-alpha/RXRA to regulate transcriptional signaling and apoptosis. This Bos taurus (Bovine) protein is Insulin-like growth factor-binding protein 3 (IGFBP3).